The sequence spans 159 residues: Phosphopantetheine adenylyltransferase (159 aa).

A substrate-binding site is contributed by serine 8. ATP-binding positions include serine 8–phenylalanine 9 and histidine 16. Substrate-binding residues include lysine 40, threonine 72, and arginine 86. ATP is bound by residues glycine 87–arginine 89, glutamate 97, and histidine 122–serine 128.

Belongs to the bacterial CoaD family. Homohexamer. It depends on Mg(2+) as a cofactor.

It localises to the cytoplasm. It catalyses the reaction (R)-4'-phosphopantetheine + ATP + H(+) = 3'-dephospho-CoA + diphosphate. Its pathway is cofactor biosynthesis; coenzyme A biosynthesis; CoA from (R)-pantothenate: step 4/5. Its function is as follows. Reversibly transfers an adenylyl group from ATP to 4'-phosphopantetheine, yielding dephospho-CoA (dPCoA) and pyrophosphate. This chain is Phosphopantetheine adenylyltransferase, found in Synechococcus sp. (strain JA-3-3Ab) (Cyanobacteria bacterium Yellowstone A-Prime).